A 377-amino-acid polypeptide reads, in one-letter code: Chaperone protein DnaJ (377 aa).

A J domain is found at 5–70; it reads DYYQILGIPK…EKRSAYDQYG (66 aa). The CR-type zinc finger occupies 132-210; it reads GIKKEIQIPT…CHGQGRVETY (79 aa). Cys145, Cys148, Cys162, Cys165, Cys184, Cys187, Cys198, and Cys201 together coordinate Zn(2+). CXXCXGXG motif repeat units lie at residues 145-152, 162-169, 184-191, and 198-205; these read CKTCYGSG, CSTCHGKG, CPTCHGKG, and CNLCHGQG.

This sequence belongs to the DnaJ family. Homodimer. Zn(2+) serves as cofactor.

It localises to the cytoplasm. Functionally, participates actively in the response to hyperosmotic and heat shock by preventing the aggregation of stress-denatured proteins and by disaggregating proteins, also in an autonomous, DnaK-independent fashion. Unfolded proteins bind initially to DnaJ; upon interaction with the DnaJ-bound protein, DnaK hydrolyzes its bound ATP, resulting in the formation of a stable complex. GrpE releases ADP from DnaK; ATP binding to DnaK triggers the release of the substrate protein, thus completing the reaction cycle. Several rounds of ATP-dependent interactions between DnaJ, DnaK and GrpE are required for fully efficient folding. Also involved, together with DnaK and GrpE, in the DNA replication of plasmids through activation of initiation proteins. The sequence is that of Chaperone protein DnaJ from Buchnera aphidicola subsp. Acyrthosiphon pisum (strain 5A).